A 624-amino-acid polypeptide reads, in one-letter code: Bifunctional 3'-phosphoadenosine 5'-phosphosulfate synthase 1 (624 aa).

At M1 the chain carries N-acetylmethionine. The segment at 1–225 (MEIPGSLCKK…VVELLQERDI (225 aa)) is adenylyl-sulfate kinase. K12 carries the N6-acetyllysine modification. 62 to 67 (GAGKTT) contacts ATP. Residues 89–92 (DNIR), F101, 106–109 (REEN), 132–133 (IS), K171, and 184–185 (GF) each bind adenosine 5'-phosphosulfate. ATP-binding positions include C207, C212, 419 to 422 (QLRN), 521 to 525 (GRDPA), and A563. Positions 234–624 (VKELYVPENK…VEYYKSLEKA (391 aa)) are sulfate adenylyltransferase.

In the N-terminal section; belongs to the APS kinase family. This sequence in the C-terminal section; belongs to the sulfate adenylyltransferase family. Homodimer. In terms of tissue distribution, expressed in the neonatal brain and in cartilage.

The enzyme catalyses sulfate + ATP + H(+) = adenosine 5'-phosphosulfate + diphosphate. It carries out the reaction adenosine 5'-phosphosulfate + ATP = 3'-phosphoadenylyl sulfate + ADP + H(+). It participates in sulfur metabolism; sulfate assimilation. In terms of biological role, bifunctional enzyme with both ATP sulfurylase and APS kinase activity, which mediates two steps in the sulfate activation pathway. The first step is the transfer of a sulfate group to ATP to yield adenosine 5'-phosphosulfate (APS), and the second step is the transfer of a phosphate group from ATP to APS yielding 3'-phosphoadenylylsulfate (PAPS: activated sulfate donor used by sulfotransferase). In mammals, PAPS is the sole source of sulfate; APS appears to be only an intermediate in the sulfate-activation pathway. Required for normal biosynthesis of sulfated L-selectin ligands in endothelial cells. The protein is Bifunctional 3'-phosphoadenosine 5'-phosphosulfate synthase 1 (Papss1) of Mus musculus (Mouse).